The primary structure comprises 302 residues: Acetaldehyde dehydrogenase 2 (302 aa).

Residue Cys130 is the Acyl-thioester intermediate of the active site. Residues 161 to 169 (SVGPGTRRN) and Asn272 each bind NAD(+).

The protein belongs to the acetaldehyde dehydrogenase family.

The enzyme catalyses acetaldehyde + NAD(+) + CoA = acetyl-CoA + NADH + H(+). The chain is Acetaldehyde dehydrogenase 2 from Cupriavidus necator (strain ATCC 17699 / DSM 428 / KCTC 22496 / NCIMB 10442 / H16 / Stanier 337) (Ralstonia eutropha).